We begin with the raw amino-acid sequence, 207 residues long: Ras-related protein Rab-8A (207 aa).

The GTP site is built by Ser17, Gly18, Val19, Gly20, Lys21, Thr22, Cys23, Ser35, Ser39, and Thr40. Thr22 lines the Mg(2+) pocket. 2 short sequence motifs (switch) span residues 31-45 (DAFN…GIDF) and 63-80 (DTAG…YYRG). Positions 40 and 63 each coordinate Mg(2+). Gly66 lines the GTP pocket. Thr72 is modified (phosphothreonine). The GTP site is built by Asn121, Lys122, Asp124, Ala152, and Lys153. A phosphoserine mark is found at Ser181 and Ser185. Cys204 is modified (cysteine methyl ester). Cys204 carries the S-geranylgeranyl cysteine lipid modification. Residues 205–207 (VLL) constitute a propeptide, removed in mature form.

The protein belongs to the small GTPase superfamily. Rab family. Interacts (GTP-bound form) with MICALL1; regulates RAB8A association with recycling endosomes. Interacts with MICALL2; competes with RAB13 and is involved in E-cadherin endocytic recycling. Interacts (GTP-bound form) with MICAL1, MICALCL, MICAL3, EHBP1 and EHBP1L1; at least in case of MICAL1, MICALCL, MICAL3 and EHBP1L1 two molecules of RAB8A can bind to one molecule of the effector protein; ternary complexes of RAB8A, RAB13 and either MICAL1 or EHBP1L1 are possible. Interacts with EHD1. Interacts with MAP4K2 and SYTL4. Interacts with SGSM1 and SGSM3. Interacts with RABIF, RIMS2, RPH3A and RPH3A. Interacts with OPTN. Interacts with RAB3IP, RAB3IP functions as guanine exchange factor (GEF). Interacts with MYO5B. Interacts with CIMAP3. Interacts with BIRC6/bruce. Interacts with OCRL. Interacts with AHI1. Interacts with DCDC1. Interacts with LRRK2; interaction facilitates phosphorylation of Thr-72. Interacts with RAB31P, GDI1, GDI2, CHM, CHML, RABGGTA, RABGGTB, TBC1D15 and INPP5B; these interactions are dependent on Thr-72 not being phosphorylated. Interacts with RILPL1 and RILPL2; these interactions are dependent on the phosphorylation of Thr-72 by LRRK2. Interacts with DZIP1; prevents inhibition by the GDP-dissociation inhibitor GDI2. Interacts (in GDP-bound form) with RAB3IP/Rabin8, RAB3IP functions as guanine exchange factor (GEF) towards RAB8A. Interacts (in GDP-bound form) with RPGR, RPGR functions as GEF towards RAB8A. It depends on Mg(2+) as a cofactor. In terms of processing, phosphorylation of Thr-72 in the switch II region by LRRK2 prevents the association of RAB regulatory proteins, including CHM, CHML and RAB GDP dissociation inhibitors GDI1 and GDI2. Phosphorylation by LRRK2 is required for localization to stressed lysosomes.

It localises to the cell membrane. It is found in the golgi apparatus. Its subcellular location is the endosome membrane. The protein resides in the recycling endosome membrane. The protein localises to the cell projection. It localises to the cilium. It is found in the cytoplasmic vesicle. Its subcellular location is the phagosome membrane. The protein resides in the cytoplasm. The protein localises to the cytoskeleton. It localises to the microtubule organizing center. It is found in the centrosome. Its subcellular location is the centriole. The protein resides in the cilium basal body. The protein localises to the midbody. It localises to the lysosome. The enzyme catalyses GTP + H2O = GDP + phosphate + H(+). Regulated by guanine nucleotide exchange factors (GEFs) such as RAB3IP/Rabin8 and RPGR which promote the exchange of bound GDP for free GTP, GTPase activating proteins (GAPs) which increase the GTP hydrolysis activity, and GDP dissociation inhibitors (GDIs) which inhibit the dissociation of the nucleotide from the GTPase. Activated in response to insulin. In terms of biological role, the small GTPases Rab are key regulators of intracellular membrane trafficking, from the formation of transport vesicles to their fusion with membranes. Rabs cycle between an inactive GDP-bound form and an active GTP-bound form that is able to recruit to membranes different sets of downstream effectors directly responsible for vesicle formation, movement, tethering and fusion. RAB8A is involved in polarized vesicular trafficking and neurotransmitter release. Together with RAB11A, RAB3IP, the exocyst complex, PARD3, PRKCI, ANXA2, CDC42 and DNMBP promotes transcytosis of PODXL to the apical membrane initiation sites (AMIS), apical surface formation and lumenogenesis. Regulates the compacted morphology of the Golgi. Together with MYO5B and RAB11A participates in epithelial cell polarization. Also involved in membrane trafficking to the cilium and ciliogenesis. Together with MICALL2, may also regulate adherens junction assembly. May play a role in insulin-induced transport to the plasma membrane of the glucose transporter GLUT4 and therefore play a role in glucose homeostasis. Involved in autophagy. Participates in the export of a subset of neosynthesized proteins through a Rab8-Rab10-Rab11-dependent endososomal export route. Targeted to and stabilized on stressed lysosomes through LRRK2 phosphorylation. Suppresses stress-induced lysosomal enlargement through EHBP1 and EHNP1L1 effector proteins. The chain is Ras-related protein Rab-8A (RAB8A) from Canis lupus familiaris (Dog).